Consider the following 2042-residue polypeptide: Cell adhesion molecule DSCAML1 (2042 aa).

Residues Met-1–Thr-17 form the signal peptide. Over Glu-18–Lys-1592 the chain is Extracellular. N-linked (GlcNAc...) asparagine glycans are attached at residues Asn-28 and Asn-78. Ig-like C2-type domains lie at Ser-37–Ser-107, Pro-114–Ser-216, Pro-227–Thr-311, Pro-315–Thr-403, Pro-409–Asn-502, Pro-507–Ser-587, Pro-597–Ile-686, Pro-691–Thr-785, and Pro-789–Gln-886. Cystine bridges form between Cys-46–Cys-102, Cys-145–Cys-197, Cys-248–Cys-295, Cys-337–Cys-387, and Cys-430–Cys-486. Residues Asn-369, Asn-472, Asn-514, Asn-557, Asn-667, Asn-711, Asn-750, Asn-797, and Asn-810 are each glycosylated (N-linked (GlcNAc...) asparagine). Disulfide bonds link Cys-527-Cys-576 and Cys-618-Cys-670. Cys-712 and Cys-768 are joined by a disulfide. Cysteines 811 and 868 form a disulfide. 4 consecutive Fibronectin type-III domains span residues Pro-888–Ala-985, Pro-990–Asp-1089, Pro-1094–Asp-1190, and Pro-1194–Ala-1289. Residues Asn-927, Asn-1083, Asn-1145, Asn-1163, Asn-1276, and Asn-1346 are each glycosylated (N-linked (GlcNAc...) asparagine). The Ig-like C2-type 10 domain occupies Glu-1279 to Asn-1368. Cys-1312 and Cys-1364 are disulfide-bonded. Fibronectin type-III domains lie at Pro-1384–Arg-1478 and Glu-1479–Pro-1579. 3 N-linked (GlcNAc...) asparagine glycosylation sites follow: Asn-1493, Asn-1532, and Asn-1562. A helical membrane pass occupies residues Leu-1593–Ile-1613. The Cytoplasmic portion of the chain corresponds to Arg-1614–Val-2042. 4 disordered regions span residues Pro-1716–Arg-1742, Ser-1781–Ala-1805, Ser-1841–Pro-1865, and Pro-1940–Val-2042. Basic residues predominate over residues Lys-1733–Arg-1742. 2 stretches are compositionally biased toward polar residues: residues Ser-1781–Gln-1790 and Ser-1841–Ser-1863. The segment covering Ala-1951 to Ser-1960 has biased composition (pro residues). Positions Ser-1961–Pro-1983 are enriched in low complexity. Residues Ala-1984–Pro-1995 are compositionally biased toward pro residues. Composition is skewed to low complexity over residues Pro-1996 to Thr-2005 and Gly-2023 to Ala-2034.

In terms of assembly, homodimer; mediates homophilic interactions to promote cell adhesion. SDK1, SDK2, DSCAM and DSCAML1 are expressed in non-overlapping subsets of interneurons and retinal ganglion cells (RGCs) that form synapses in distinct inner plexiform layer (IPL) sublaminae.

Its subcellular location is the cell membrane. The protein resides in the synapse. Its function is as follows. Cell adhesion molecule that plays a role in neuronal self-avoidance. Promotes repulsion between specific neuronal processes of either the same cell or the same subtype of cells. Adhesion molecule that promotes lamina-specific synaptic connections in the retina: expressed in specific subsets of interneurons and retinal ganglion cells (RGCs) and promotes synaptic connectivity via homophilic interactions. In Gallus gallus (Chicken), this protein is Cell adhesion molecule DSCAML1 (DSCAML1).